The following is a 45-amino-acid chain: Large ribosomal subunit protein bL34 (45 aa).

Belongs to the bacterial ribosomal protein bL34 family.

The protein is Large ribosomal subunit protein bL34 (rpmH) of Streptomyces coelicolor (strain ATCC BAA-471 / A3(2) / M145).